The primary structure comprises 215 residues: Deoxyadenosine kinase (215 aa).

9-17 contacts ATP; it reads GPIGAGKSS. Substrate-binding residues include Glu-33, Tyr-45, and Asn-56. The Proton acceptor role is filled by Asp-79. Residues Arg-80, Asp-85, and Glu-150 each coordinate substrate.

Belongs to the DCK/DGK family. As to quaternary structure, heterodimer of a deoxyadenosine (DAK) and a deoxyguanosine kinase (DGK).

The enzyme catalyses 2'-deoxyadenosine + ATP = dAMP + ADP + H(+). Functionally, DGK/DAK plays an essential role in generating the deoxyribonucleotide precursors, dGTP and dATP, for DNA metabolism. This is Deoxyadenosine kinase from Lactobacillus acidophilus (strain ATCC 700396 / NCK56 / N2 / NCFM).